The chain runs to 601 residues: Elongation factor 4 (601 aa).

One can recognise a tr-type G domain in the interval 6-188 (NYIRNFSIVA…AIVRQLPPPH (183 aa)). GTP is bound by residues 18 to 23 (DHGKST) and 135 to 138 (NKVD).

The protein belongs to the TRAFAC class translation factor GTPase superfamily. Classic translation factor GTPase family. LepA subfamily.

The protein resides in the cell inner membrane. It carries out the reaction GTP + H2O = GDP + phosphate + H(+). Functionally, required for accurate and efficient protein synthesis under certain stress conditions. May act as a fidelity factor of the translation reaction, by catalyzing a one-codon backward translocation of tRNAs on improperly translocated ribosomes. Back-translocation proceeds from a post-translocation (POST) complex to a pre-translocation (PRE) complex, thus giving elongation factor G a second chance to translocate the tRNAs correctly. Binds to ribosomes in a GTP-dependent manner. The protein is Elongation factor 4 of Bartonella quintana (strain Toulouse) (Rochalimaea quintana).